The following is a 418-amino-acid chain: UDP-N-acetylglucosamine 1-carboxyvinyltransferase (418 aa).

23 to 24 (KN) serves as a coordination point for phosphoenolpyruvate. Arg-93 contributes to the UDP-N-acetyl-alpha-D-glucosamine binding site. Asp-117 acts as the Proton donor in catalysis. Asp-305 and Val-327 together coordinate UDP-N-acetyl-alpha-D-glucosamine.

It belongs to the EPSP synthase family. MurA subfamily.

The protein resides in the cytoplasm. The enzyme catalyses phosphoenolpyruvate + UDP-N-acetyl-alpha-D-glucosamine = UDP-N-acetyl-3-O-(1-carboxyvinyl)-alpha-D-glucosamine + phosphate. Its pathway is cell wall biogenesis; peptidoglycan biosynthesis. In terms of biological role, cell wall formation. Adds enolpyruvyl to UDP-N-acetylglucosamine. This is UDP-N-acetylglucosamine 1-carboxyvinyltransferase from Mycobacterium bovis (strain ATCC BAA-935 / AF2122/97).